The following is a 775-amino-acid chain: Meiotic driver SPOK2 (775 aa).

Residues 4 to 69 (KDRIAQLLRE…RCERERLQLE (66 aa)) adopt a coiled-coil conformation. Disordered regions lie at residues 18–51 (KAREEEAKARAEEAKARAEEAKARAEEAKAREEE), 211–249 (QKDDGSSGADDNTSDGSLERRQQAGPNKRPTSKRKYICS), 442–525 (LSSA…AMAD), and 734–761 (PPPKPRAVSRLSKPKRKRGDSEADAQLF). Residues 444–457 (SAPSSQNTDISEYT) show a composition bias toward polar residues.

Its subcellular location is the cytoplasm. The protein resides in the nucleus. Promotes unequal transmission of alleles from the parental zygote to progeny spores by acting as poison/antidote system, leading to poisoning of progeny that do not inherit the allele. May possess DNA nuclease activity that leads to spore killing, and a kinase activity that confers resistance to the nuclease activity. The sequence is that of Meiotic driver SPOK2 from Podospora anserina (strain S / ATCC MYA-4624 / DSM 980 / FGSC 10383) (Pleurage anserina).